The following is a 343-amino-acid chain: Aspartate carbamoyltransferase catalytic subunit (343 aa).

Carbamoyl phosphate contacts are provided by arginine 71 and threonine 72. Residue lysine 99 coordinates L-aspartate. Carbamoyl phosphate contacts are provided by arginine 121, histidine 149, and glutamine 152. L-aspartate contacts are provided by arginine 195 and arginine 249. The carbamoyl phosphate site is built by glycine 290 and proline 291.

Belongs to the aspartate/ornithine carbamoyltransferase superfamily. ATCase family. As to quaternary structure, heterododecamer (2C3:3R2) of six catalytic PyrB chains organized as two trimers (C3), and six regulatory PyrI chains organized as three dimers (R2).

It carries out the reaction carbamoyl phosphate + L-aspartate = N-carbamoyl-L-aspartate + phosphate + H(+). Its pathway is pyrimidine metabolism; UMP biosynthesis via de novo pathway; (S)-dihydroorotate from bicarbonate: step 2/3. Catalyzes the condensation of carbamoyl phosphate and aspartate to form carbamoyl aspartate and inorganic phosphate, the committed step in the de novo pyrimidine nucleotide biosynthesis pathway. The polypeptide is Aspartate carbamoyltransferase catalytic subunit (Rhodopirellula baltica (strain DSM 10527 / NCIMB 13988 / SH1)).